The following is a 131-amino-acid chain: Sec-independent protein translocase protein TatB (131 aa).

The helical transmembrane segment at 1-21 (MFDISFAELVVVGIVALIVIG) threads the bilayer. 2 stretches are compositionally biased toward polar residues: residues 71 to 93 (NSFENSVRSEINKIQETTETQSA) and 111 to 131 (PVNTSETKTSSAPAEPRQPNS). The segment at 71-131 (NSFENSVRSE…APAEPRQPNS (61 aa)) is disordered.

This sequence belongs to the TatB family. In terms of assembly, the Tat system comprises two distinct complexes: a TatABC complex, containing multiple copies of TatA, TatB and TatC subunits, and a separate TatA complex, containing only TatA subunits. Substrates initially bind to the TatABC complex, which probably triggers association of the separate TatA complex to form the active translocon.

The protein localises to the cell inner membrane. In terms of biological role, part of the twin-arginine translocation (Tat) system that transports large folded proteins containing a characteristic twin-arginine motif in their signal peptide across membranes. Together with TatC, TatB is part of a receptor directly interacting with Tat signal peptides. TatB may form an oligomeric binding site that transiently accommodates folded Tat precursor proteins before their translocation. The sequence is that of Sec-independent protein translocase protein TatB from Nitrosomonas europaea (strain ATCC 19718 / CIP 103999 / KCTC 2705 / NBRC 14298).